A 357-amino-acid chain; its full sequence is 3-isopropylmalate dehydrogenase (357 aa).

G76–E89 is a binding site for NAD(+). Residues R96, R106, R134, and D224 each contribute to the substrate site. Residues D224, D248, and D252 each contribute to the Mg(2+) site. Residue G282–N294 participates in NAD(+) binding.

It belongs to the isocitrate and isopropylmalate dehydrogenases family. LeuB type 1 subfamily. As to quaternary structure, homodimer. Mg(2+) is required as a cofactor. The cofactor is Mn(2+).

The protein localises to the cytoplasm. It carries out the reaction (2R,3S)-3-isopropylmalate + NAD(+) = 4-methyl-2-oxopentanoate + CO2 + NADH. It participates in amino-acid biosynthesis; L-leucine biosynthesis; L-leucine from 3-methyl-2-oxobutanoate: step 3/4. Catalyzes the oxidation of 3-carboxy-2-hydroxy-4-methylpentanoate (3-isopropylmalate) to 3-carboxy-4-methyl-2-oxopentanoate. The product decarboxylates to 4-methyl-2 oxopentanoate. The sequence is that of 3-isopropylmalate dehydrogenase from Xanthomonas euvesicatoria pv. vesicatoria (strain 85-10) (Xanthomonas campestris pv. vesicatoria).